Consider the following 281-residue polypeptide: Glyoxalase 1 (281 aa).

VOC domains lie at 4 to 127 (RALH…IGKA) and 132 to 251 (KVLR…FVGD).

It belongs to the glyoxalase I family.

In terms of biological role, thought to act as a glyoxalase. May remove methylglyoxal from mitochondrial proteins. Has roles in reducing oxidative stress and increasing lifespan. The protein is Glyoxalase 1 of Caenorhabditis briggsae.